Reading from the N-terminus, the 376-residue chain is Queuine tRNA-ribosyltransferase (376 aa).

Aspartate 89 acts as the Proton acceptor in catalysis. Substrate is bound by residues 89 to 93 (DSGGF), aspartate 143, glutamine 187, and glycine 214. The segment at 245-251 (GVGKPQD) is RNA binding. Aspartate 264 acts as the Nucleophile in catalysis. The segment at 269–273 (TRNAR) is RNA binding; important for wobble base 34 recognition. Residues cysteine 302, cysteine 304, cysteine 307, and histidine 333 each coordinate Zn(2+).

Belongs to the queuine tRNA-ribosyltransferase family. Homodimer. Within each dimer, one monomer is responsible for RNA recognition and catalysis, while the other monomer binds to the replacement base PreQ1. It depends on Zn(2+) as a cofactor.

It carries out the reaction 7-aminomethyl-7-carbaguanine + guanosine(34) in tRNA = 7-aminomethyl-7-carbaguanosine(34) in tRNA + guanine. Its pathway is tRNA modification; tRNA-queuosine biosynthesis. Its function is as follows. Catalyzes the base-exchange of a guanine (G) residue with the queuine precursor 7-aminomethyl-7-deazaguanine (PreQ1) at position 34 (anticodon wobble position) in tRNAs with GU(N) anticodons (tRNA-Asp, -Asn, -His and -Tyr). Catalysis occurs through a double-displacement mechanism. The nucleophile active site attacks the C1' of nucleotide 34 to detach the guanine base from the RNA, forming a covalent enzyme-RNA intermediate. The proton acceptor active site deprotonates the incoming PreQ1, allowing a nucleophilic attack on the C1' of the ribose to form the product. After dissociation, two additional enzymatic reactions on the tRNA convert PreQ1 to queuine (Q), resulting in the hypermodified nucleoside queuosine (7-(((4,5-cis-dihydroxy-2-cyclopenten-1-yl)amino)methyl)-7-deazaguanosine). This is Queuine tRNA-ribosyltransferase from Erwinia tasmaniensis (strain DSM 17950 / CFBP 7177 / CIP 109463 / NCPPB 4357 / Et1/99).